The sequence spans 435 residues: Transcription activator AKTR-2 (435 aa).

The segment at residues 16-43 (CDFCTQSKLRCNKNKPSCRRCTIQQQVC) is a DNA-binding region (zn(2)-C6 fungal-type). The disordered stretch occupies residues 49-103 (RRTGRPPKHPRRADDSQETSGQHGHQDPMTSAPADSCEQQSSHLDLEGDDTDFTL). Over residues 50-59 (RTGRPPKHPR) the composition is skewed to basic residues.

The protein localises to the nucleus. Its function is as follows. Transcription factor that regulates the expression of the gene clusters that mediate the biosynthesis of the host-selective toxins (HSTs) AK-toxins responsible for Japanese pear black spot disease by the Japanese pear pathotype. AK-toxins are esters of 9,10-epoxy 8-hydroxy 9-methyldecatrienoic acid (EDA). On cellular level, AK-toxins affect plasma membrane of susceptible cells and cause a sudden increase in loss of K(+) after a few minutes of toxin treatment. The sequence is that of Transcription activator AKTR-2 from Alternaria alternata (Alternaria rot fungus).